The following is a 152-amino-acid chain: Transcriptional repressor NrdR (152 aa).

A zinc finger lies at 3–34; that stretch reads CPFCNHGELKVIDSRNAPEANAIKRRRECLNC. The ATP-cone domain maps to 48–138; that stretch reads LQVLKRDGRY…VYRRFKDVGE (91 aa).

It belongs to the NrdR family. The cofactor is Zn(2+).

Functionally, negatively regulates transcription of bacterial ribonucleotide reductase nrd genes and operons by binding to NrdR-boxes. This Chlamydia abortus (strain DSM 27085 / S26/3) (Chlamydophila abortus) protein is Transcriptional repressor NrdR.